We begin with the raw amino-acid sequence, 862 residues long: FAS1 domain-containing protein YLR001C (862 aa).

Residues 1-23 (MNMAIQTIKYIFWLLPILGLTQA) form the signal peptide. Topologically, residues 24–762 (LLQNPGDDFP…KYHLRLPGIA (739 aa)) are vacuolar. The FAS1 1 domain maps to 34–162 (FSTVIDILSE…ASLQGINNLL (129 aa)). Residues asparagine 68, asparagine 112, asparagine 152, asparagine 200, asparagine 291, asparagine 333, asparagine 450, asparagine 521, asparagine 542, asparagine 569, asparagine 663, asparagine 679, and asparagine 688 are each glycosylated (N-linked (GlcNAc...) asparagine). 2 consecutive FAS1 domains span residues 463 to 604 (PGDL…DQLD) and 606 to 744 (PVDL…DKPI). Residues 763–783 (VGFGVIIGVTIAISLLFCIII) form a helical membrane-spanning segment. The Cytoplasmic segment spans residues 784–862 (TRGGKVKDKN…QKGGRSVSTS (79 aa)).

The protein resides in the vacuole membrane. This Saccharomyces cerevisiae (strain ATCC 204508 / S288c) (Baker's yeast) protein is FAS1 domain-containing protein YLR001C.